The chain runs to 321 residues: Chloroplastic calcium uniporter protein (321 aa).

A chloroplast-targeting transit peptide spans 1–56; that stretch reads MSSKKSLVQSLFNISKTYSRISGLTRMRPTKSGGIPPDAGDSGIRRRFLHKRAFFS. The next 2 helical transmembrane spans lie at 223–243 and 249–269; these read LWAG…LTFW and VMEP…YAFF. Positions 247-255 match the Selectivity filter motif; the sequence is WDVMEPICF. Glu251 provides a ligand contact to Ca(2+).

The protein belongs to the MCU (TC 1.A.77) family.

It is found in the plastid. It localises to the chloroplast membrane. The enzyme catalyses Ca(2+)(in) = Ca(2+)(out). Functionally, chloroplastic membrane calcium uniporter that mediates calcium uptake into chloroplast stroma. Constitutes a pore-forming and calcium-conducting subunit. Chloroplastic calcium homeostasis plays key roles in cellular physiology. Promotes calcium uptake into chloroplast stroma in response to osmotic-stress, fine-tuning cytosolic MAPK3/MAPK6 phosphorylation and affecting stomata opening. In Arabidopsis thaliana (Mouse-ear cress), this protein is Chloroplastic calcium uniporter protein.